Reading from the N-terminus, the 778-residue chain is Double zinc ribbon and ankyrin repeat-containing protein 1 (778 aa).

Phosphoserine is present on residues Ser179 and Ser201. 2 consecutive DZANK-type zinc fingers follow at residues 230 to 289 (CAHC…CVVC) and 359 to 407 (CSRC…GSCG). ANK repeat units lie at residues 631–662 (ENKLLLEEVGSSGKGRLSVLEQLLDEGADPNC) and 666–695 (QGRPAVIVAVVNKHYEAIPVLAQRGADIDQ). At Ser768 the chain carries Phosphoserine.

In terms of assembly, interacts with NINL. Associates with DYNC1H1 and multiple dynein intermediate and light chains as well as actin-binding proteins.

It localises to the cytoplasm. The protein localises to the cytoskeleton. Its subcellular location is the microtubule organizing center. It is found in the centrosome. The protein resides in the cilium basal body. Functionally, involved in vesicle transport in photoreceptor cells. The polypeptide is Double zinc ribbon and ankyrin repeat-containing protein 1 (Dzank1) (Mus musculus (Mouse)).